The primary structure comprises 84 residues: Large ribosomal subunit protein bL27 (84 aa).

The interval 1 to 20 (MAHKKGGGSTKNGRDSNPKY) is disordered.

It belongs to the bacterial ribosomal protein bL27 family.

The polypeptide is Large ribosomal subunit protein bL27 (rpmA) (Prosthecochloris vibrioformis (Chlorobium vibrioforme)).